The following is a 243-amino-acid chain: Ribonuclease 3 (243 aa).

One can recognise an RNase III domain in the interval 10–146; it reads VNRFRKRFDT…FIGALYLDQG (137 aa). Mg(2+) is bound at residue glutamate 59. The active site involves aspartate 63. Residues aspartate 132 and glutamate 135 each contribute to the Mg(2+) site. Glutamate 135 is an active-site residue. The region spanning 172 to 241 is the DRBM domain; that stretch reads DFKTQFQEYV…AESAYKQLKQ (70 aa). Basic and acidic residues predominate over residues 219–231; it reads GKGKTKKESEQRA. A disordered region spans residues 219-243; the sequence is GKGKTKKESEQRAAESAYKQLKQIK.

It belongs to the ribonuclease III family. As to quaternary structure, homodimer. It depends on Mg(2+) as a cofactor.

Its subcellular location is the cytoplasm. The catalysed reaction is Endonucleolytic cleavage to 5'-phosphomonoester.. Functionally, digests double-stranded RNA. Involved in the processing of primary rRNA transcript to yield the immediate precursors to the large and small rRNAs (23S and 16S). Processes some mRNAs, and tRNAs when they are encoded in the rRNA operon. Processes pre-crRNA and tracrRNA of type II CRISPR loci if present in the organism. The sequence is that of Ribonuclease 3 from Staphylococcus aureus (strain USA300).